A 434-amino-acid chain; its full sequence is Nicotinate phosphoribosyltransferase (434 aa).

His-242 is modified (phosphohistidine; by autocatalysis).

This sequence belongs to the NAPRTase family. In terms of processing, transiently phosphorylated on a His residue during the reaction cycle. Phosphorylation strongly increases the affinity for substrates and increases the rate of nicotinate D-ribonucleotide production. Dephosphorylation regenerates the low-affinity form of the enzyme, leading to product release.

The catalysed reaction is nicotinate + 5-phospho-alpha-D-ribose 1-diphosphate + ATP + H2O = nicotinate beta-D-ribonucleotide + ADP + phosphate + diphosphate. The protein operates within cofactor biosynthesis; NAD(+) biosynthesis; nicotinate D-ribonucleotide from nicotinate: step 1/1. In terms of biological role, catalyzes the synthesis of beta-nicotinate D-ribonucleotide from nicotinate and 5-phospho-D-ribose 1-phosphate at the expense of ATP. The protein is Nicotinate phosphoribosyltransferase of Mesorhizobium japonicum (strain LMG 29417 / CECT 9101 / MAFF 303099) (Mesorhizobium loti (strain MAFF 303099)).